Reading from the N-terminus, the 485-residue chain is Glutamate--tRNA ligase 1 (485 aa).

Positions 9–19 match the 'HIGH' region motif; sequence PSPTGHLHIGG. The 'KMSKS' region signature appears at 250–254; it reads KMSKR. Lys253 contacts ATP.

This sequence belongs to the class-I aminoacyl-tRNA synthetase family. Glutamate--tRNA ligase type 1 subfamily. In terms of assembly, monomer.

It localises to the cytoplasm. It catalyses the reaction tRNA(Glu) + L-glutamate + ATP = L-glutamyl-tRNA(Glu) + AMP + diphosphate. Functionally, catalyzes the attachment of glutamate to tRNA(Glu) in a two-step reaction: glutamate is first activated by ATP to form Glu-AMP and then transferred to the acceptor end of tRNA(Glu). In Caldicellulosiruptor saccharolyticus (strain ATCC 43494 / DSM 8903 / Tp8T 6331), this protein is Glutamate--tRNA ligase 1.